We begin with the raw amino-acid sequence, 137 residues long: NADPH-dependent 7-cyano-7-deazaguanine reductase (137 aa).

The active-site Thioimide intermediate is the Cys-45. Asp-52 serves as the catalytic Proton donor. Substrate contacts are provided by residues 68 to 70 and 87 to 88; these read VEL and QE.

It belongs to the GTP cyclohydrolase I family. QueF type 1 subfamily.

It is found in the cytoplasm. It catalyses the reaction 7-aminomethyl-7-carbaguanine + 2 NADP(+) = 7-cyano-7-deazaguanine + 2 NADPH + 3 H(+). Its pathway is tRNA modification; tRNA-queuosine biosynthesis. In terms of biological role, catalyzes the NADPH-dependent reduction of 7-cyano-7-deazaguanine (preQ0) to 7-aminomethyl-7-deazaguanine (preQ1). In Thermotoga petrophila (strain ATCC BAA-488 / DSM 13995 / JCM 10881 / RKU-1), this protein is NADPH-dependent 7-cyano-7-deazaguanine reductase.